Reading from the N-terminus, the 194-residue chain is Histone H1.0 (194 aa).

Met-1 is subject to N-acetylmethionine. Residues 1 to 11 (MTENSTSAPAA) show a composition bias toward low complexity. Residues 1–29 (MTENSTSAPAAKPKRAKASKKSTDHPKYS) are disordered. Thr-2 bears the N-acetylthreonine; in Histone H1.0, N-terminally processed mark. The H15 domain occupies 24–97 (DHPKYSDMVV…GASGSFRLAK (74 aa)). The residue at position 42 (Arg-42) is a Citrulline. Residues 84-194 (TKGVGASGSF…SSAKRAGKKK (111 aa)) are disordered. Ser-104 is modified (ADP-ribosylserine). A compositionally biased stretch (basic residues) spans 105-194 (VAFKKTKKEI…SSAKRAGKKK (90 aa)).

It belongs to the histone H1/H5 family. In terms of processing, ADP-ribosylated on Ser-104 in response to DNA damage.

The protein localises to the nucleus. It localises to the chromosome. In terms of biological role, histones H1 are necessary for the condensation of nucleosome chains into higher-order structures. The histones H1.0 are found in cells that are in terminal stages of differentiation or that have low rates of cell division. This is Histone H1.0 (H1-0) from Pongo abelii (Sumatran orangutan).